The primary structure comprises 639 residues: DNA gyrase subunit B (639 aa).

Positions 392 to 402 (QAEELTRRKSA) are enriched in basic and acidic residues. The interval 392–416 (QAEELTRRKSALESTSLPGKLADCQ) is disordered. A Toprim domain is found at 423-537 (SELFIVEGDS…AGYVYAAQPP (115 aa)). Glu429, Asp502, and Asp504 together coordinate Mg(2+). A Glycyl lysine isopeptide (Lys-Gly) (interchain with G-Cter in SAMP2) cross-link involves residue Lys624.

This sequence belongs to the type II topoisomerase GyrB family. In terms of assembly, heterotetramer, composed of two GyrA and two GyrB chains. In the heterotetramer, GyrA contains the active site tyrosine that forms a transient covalent intermediate with DNA, while GyrB binds cofactors and catalyzes ATP hydrolysis. Mg(2+) serves as cofactor. Requires Mn(2+) as cofactor. It depends on Ca(2+) as a cofactor.

Its subcellular location is the cytoplasm. It carries out the reaction ATP-dependent breakage, passage and rejoining of double-stranded DNA.. A type II topoisomerase that negatively supercoils closed circular double-stranded (ds) DNA in an ATP-dependent manner to modulate DNA topology and maintain chromosomes in an underwound state. Negative supercoiling favors strand separation, and DNA replication, transcription, recombination and repair, all of which involve strand separation. Also able to catalyze the interconversion of other topological isomers of dsDNA rings, including catenanes and knotted rings. Type II topoisomerases break and join 2 DNA strands simultaneously in an ATP-dependent manner. This chain is DNA gyrase subunit B, found in Haloferax volcanii (strain ATCC 29605 / DSM 3757 / JCM 8879 / NBRC 14742 / NCIMB 2012 / VKM B-1768 / DS2) (Halobacterium volcanii).